The primary structure comprises 78 residues: UPF0335 protein RPR_04100 (78 aa).

Belongs to the UPF0335 family.

The protein is UPF0335 protein RPR_04100 of Rickettsia peacockii (strain Rustic).